A 62-amino-acid chain; its full sequence is uncharacterized protein (62 aa).

A signal peptide spans 1-19 (MKLIILLFVVAAFVTLAMG).

This is an uncharacterized protein from Lepidoptera (butterflies and moths).